Here is a 188-residue protein sequence, read N- to C-terminus: Elongation factor P (188 aa).

N6-(3,6-diaminohexanoyl)-5-hydroxylysine is present on Lys-34.

Belongs to the elongation factor P family. May be beta-lysylated on the epsilon-amino group of Lys-34 by the combined action of EpmA and EpmB, and then hydroxylated on the C5 position of the same residue by EpmC (if this protein is present). Lysylation is critical for the stimulatory effect of EF-P on peptide-bond formation. The lysylation moiety may extend toward the peptidyltransferase center and stabilize the terminal 3-CCA end of the tRNA. Hydroxylation of the C5 position on Lys-34 may allow additional potential stabilizing hydrogen-bond interactions with the P-tRNA.

The protein resides in the cytoplasm. The protein operates within protein biosynthesis; polypeptide chain elongation. Its function is as follows. Involved in peptide bond synthesis. Alleviates ribosome stalling that occurs when 3 or more consecutive Pro residues or the sequence PPG is present in a protein, possibly by augmenting the peptidyl transferase activity of the ribosome. Modification of Lys-34 is required for alleviation. The polypeptide is Elongation factor P (Photorhabdus laumondii subsp. laumondii (strain DSM 15139 / CIP 105565 / TT01) (Photorhabdus luminescens subsp. laumondii)).